The chain runs to 179 residues: Large ribosomal subunit protein uL5 (179 aa).

This sequence belongs to the universal ribosomal protein uL5 family. Part of the 50S ribosomal subunit; part of the 5S rRNA/L5/L18/L25 subcomplex. Contacts the 5S rRNA and the P site tRNA. Forms a bridge to the 30S subunit in the 70S ribosome.

In terms of biological role, this is one of the proteins that bind and probably mediate the attachment of the 5S RNA into the large ribosomal subunit, where it forms part of the central protuberance. In the 70S ribosome it contacts protein S13 of the 30S subunit (bridge B1b), connecting the 2 subunits; this bridge is implicated in subunit movement. Contacts the P site tRNA; the 5S rRNA and some of its associated proteins might help stabilize positioning of ribosome-bound tRNAs. This Shewanella woodyi (strain ATCC 51908 / MS32) protein is Large ribosomal subunit protein uL5.